The sequence spans 24 residues: DLFQVIKEKLKELTGGVIEGIQGV.

Expressed by the dorsal and submental skin glands.

It is found in the secreted. The polypeptide is Citropin-3.1.2 (Ranoidea citropa (Australian Blue Mountains tree frog)).